The following is a 414-amino-acid chain: MCMDRAICGNFYYGGKFDYLEVIVSDGKIAGIKKDAGNVPKTNYDGAILPAATDIHVHFRTPGETEKEDFGSGSLSAIYGGTTYVMDMPNNRFPITDYNAFGDKLGSIDSTSFADFSLYSMETGKNAMLLDRRSIGLKVYLGGSTNSTGTEVIEEGDIRKINEMNYPVVFHGESERCLKTHQMEEKNLRDHNLARPIDCEIEAAKYVSGLDIKTKIMAHVSSPDVTGNFLREVTPHHLLLNDEMPLGSFGKVNPPLRDSRTQKRLLDDYISGKFDILSSDHAPHTEDDKREFEFAKSGIIGVETRVPLFLALAQKKIVPLDVLYRTAIENPPSIFGIKKGKIEIGYDADFMVIDFTSMKRINDNRLHSKFPVSPFNGMDAIFPSHVIMRGNVVIDRYEDISDPMGVFIPKPQKE.

H56 and H58 together coordinate Zn(2+). Substrate is bound by residues 58–60 (HFR) and N90. Positions 138, 171, 219, and 280 each coordinate Zn(2+). K138 bears the N6-carboxylysine mark. Residue D280 is part of the active site. H284 serves as a coordination point for substrate.

The protein belongs to the metallo-dependent hydrolases superfamily. DHOase family. Class I DHOase subfamily. It depends on Zn(2+) as a cofactor.

It catalyses the reaction (S)-dihydroorotate + H2O = N-carbamoyl-L-aspartate + H(+). It functions in the pathway pyrimidine metabolism; UMP biosynthesis via de novo pathway; (S)-dihydroorotate from bicarbonate: step 3/3. In terms of biological role, catalyzes the reversible cyclization of carbamoyl aspartate to dihydroorotate. This is Dihydroorotase from Thermoplasma acidophilum (strain ATCC 25905 / DSM 1728 / JCM 9062 / NBRC 15155 / AMRC-C165).